Consider the following 428-residue polypeptide: Cysteine synthase 2 (428 aa).

The chain crosses the membrane as a helical span at residues 7–27; that stretch reads IYIGSAFVAGVVLTIAFKDLF. The residue at position 106 (Lys-106) is an N6-(pyridoxal phosphate)lysine. Residues 260 to 264 and Ser-367 each bind pyridoxal 5'-phosphate; that span reads GTGGT.

This sequence belongs to the cysteine synthase/cystathionine beta-synthase family. Pyridoxal 5'-phosphate serves as cofactor.

The protein resides in the mitochondrion outer membrane. It catalyses the reaction O-acetyl-L-serine + hydrogen sulfide = L-cysteine + acetate. Putative cysteine synthase that catalyzes the conversion of O-acetyl-L-serine (OAS) into cysteine, the last step in the cysteine biosynthesis pathway. However, in contrast to cysteine synthase cysB, this CS-like protein seems not to function in cysteine biosynthesis. This chain is Cysteine synthase 2, found in Emericella nidulans (strain FGSC A4 / ATCC 38163 / CBS 112.46 / NRRL 194 / M139) (Aspergillus nidulans).